A 288-amino-acid chain; its full sequence is Light-independent protochlorophyllide reductase iron-sulfur ATP-binding protein (288 aa).

ATP-binding positions include 12-17 and Lys-41; that span reads GIGKST. Residue Ser-16 coordinates Mg(2+). The [4Fe-4S] cluster site is built by Cys-97 and Cys-131. ATP is bound at residue 182-183; the sequence is NR.

Belongs to the NifH/BchL/ChlL family. In terms of assembly, homodimer. Protochlorophyllide reductase is composed of three subunits; ChlL, ChlN and ChlB. Requires [4Fe-4S] cluster as cofactor.

It catalyses the reaction chlorophyllide a + oxidized 2[4Fe-4S]-[ferredoxin] + 2 ADP + 2 phosphate = protochlorophyllide a + reduced 2[4Fe-4S]-[ferredoxin] + 2 ATP + 2 H2O. Its pathway is porphyrin-containing compound metabolism; chlorophyll biosynthesis (light-independent). Component of the dark-operative protochlorophyllide reductase (DPOR) that uses Mg-ATP and reduced ferredoxin to reduce ring D of protochlorophyllide (Pchlide) to form chlorophyllide a (Chlide). This reaction is light-independent. The L component serves as a unique electron donor to the NB-component of the complex, and binds Mg-ATP. This Synechocystis sp. (strain ATCC 27184 / PCC 6803 / Kazusa) protein is Light-independent protochlorophyllide reductase iron-sulfur ATP-binding protein.